Consider the following 382-residue polypeptide: Putative glutamate--cysteine ligase 2-1 (382 aa).

It belongs to the glutamate--cysteine ligase type 2 family. YbdK subfamily.

It carries out the reaction L-cysteine + L-glutamate + ATP = gamma-L-glutamyl-L-cysteine + ADP + phosphate + H(+). ATP-dependent carboxylate-amine ligase which exhibits weak glutamate--cysteine ligase activity. This is Putative glutamate--cysteine ligase 2-1 from Frankia casuarinae (strain DSM 45818 / CECT 9043 / HFP020203 / CcI3).